Here is a 211-residue protein sequence, read N- to C-terminus: MAKLKVIQFDGSFKGEIQPANHLLLKKAVIQPVFDAILLEQAACRQGTHSTLTKGEVSGGGKKPYKQKHTGKARQGSIRNPHYVGGGVVFGPKPNRNYKLKLNKKAYQLALTSAFAQKLNNNQVIVAEAKLFEQTNAKTKKMLTFLKNAKLTEQKLLFVIDTISKPLLLSTNNLKQIVVKQFNKVSVRDLLLAKTIIIEKAAFTKLEERLK.

Residues 50–77 (STLTKGEVSGGGKKPYKQKHTGKARQGS) are disordered. Residues 63-72 (KPYKQKHTGK) show a composition bias toward basic residues.

This sequence belongs to the universal ribosomal protein uL4 family. As to quaternary structure, part of the 50S ribosomal subunit.

In terms of biological role, one of the primary rRNA binding proteins, this protein initially binds near the 5'-end of the 23S rRNA. It is important during the early stages of 50S assembly. It makes multiple contacts with different domains of the 23S rRNA in the assembled 50S subunit and ribosome. Functionally, forms part of the polypeptide exit tunnel. The protein is Large ribosomal subunit protein uL4 of Mycoplasma genitalium (strain ATCC 33530 / DSM 19775 / NCTC 10195 / G37) (Mycoplasmoides genitalium).